The following is a 270-amino-acid chain: 4-hydroxy-tetrahydrodipicolinate reductase (270 aa).

NAD(+) contacts are provided by residues 11–16 (GAGGRM) and E37. R38 serves as a coordination point for NADP(+). NAD(+) is bound by residues 101 to 103 (GTT) and 125 to 128 (APNM). H158 acts as the Proton donor/acceptor in catalysis. A (S)-2,3,4,5-tetrahydrodipicolinate-binding site is contributed by H159. Catalysis depends on K162, which acts as the Proton donor. Position 168–169 (168–169 (GT)) interacts with (S)-2,3,4,5-tetrahydrodipicolinate.

This sequence belongs to the DapB family.

It localises to the cytoplasm. It carries out the reaction (S)-2,3,4,5-tetrahydrodipicolinate + NAD(+) + H2O = (2S,4S)-4-hydroxy-2,3,4,5-tetrahydrodipicolinate + NADH + H(+). It catalyses the reaction (S)-2,3,4,5-tetrahydrodipicolinate + NADP(+) + H2O = (2S,4S)-4-hydroxy-2,3,4,5-tetrahydrodipicolinate + NADPH + H(+). Its pathway is amino-acid biosynthesis; L-lysine biosynthesis via DAP pathway; (S)-tetrahydrodipicolinate from L-aspartate: step 4/4. Functionally, catalyzes the conversion of 4-hydroxy-tetrahydrodipicolinate (HTPA) to tetrahydrodipicolinate. This Shewanella sp. (strain MR-4) protein is 4-hydroxy-tetrahydrodipicolinate reductase.